The sequence spans 162 residues: Cytochrome c-type biogenesis protein CcmE (162 aa).

The Cytoplasmic portion of the chain corresponds to 1 to 8 (MNPRRKKR). The chain crosses the membrane as a helical; Signal-anchor for type II membrane protein span at residues 9-29 (LTLAVALIGGVAAITSLLLYA). Over 30 to 162 (LNSNLNLFYT…YSQQKAPDTK (133 aa)) the chain is Periplasmic. Residues His131 and Tyr135 each contribute to the heme site. The interval 142–162 (EAMGQKHEKLDYSQQKAPDTK) is disordered. A compositionally biased stretch (polar residues) spans 153–162 (YSQQKAPDTK).

This sequence belongs to the CcmE/CycJ family.

Its subcellular location is the cell inner membrane. Heme chaperone required for the biogenesis of c-type cytochromes. Transiently binds heme delivered by CcmC and transfers the heme to apo-cytochromes in a process facilitated by CcmF and CcmH. The polypeptide is Cytochrome c-type biogenesis protein CcmE (Shewanella baltica (strain OS223)).